The chain runs to 484 residues: Arginine ADP-riboxanase OspC3 (484 aa).

Residues His-143, Gln-144, Ser-145, Asn-155, Lys-157, Thr-169, Asn-172, and Thr-173 each contribute to the NAD(+) site. Glu-326 is a catalytic residue. ANK repeat units follow at residues 369–398 (MAHQALAYSLGNKKADIALYLLSKFNFTKQ), 413–444 (NLYDVEYLLSKDGANYKVLEYFINNGLVDVNK), and 451–480 (SGDTMLDNAMKSKDSKMIDFLLKNGAILGK).

The protein belongs to the OspC family. In terms of assembly, interacts with host calmodulin (CALM1, CALM2 and/or CALM3); specifically interacts with the apo form of calmodulin, preventing calcium-binding.

Its subcellular location is the secreted. It is found in the host cytoplasm. The catalysed reaction is L-arginyl-[protein] + NAD(+) = ADP-riboxanated L-argininyl-[protein] + nicotinamide + NH4(+) + H(+). With respect to regulation, interaction with host calmodulin (CALM1, CALM2 and/or CALM3) is required to mediate arginine ADP-riboxanation of host caspases. Functionally, ADP-riboxanase effector that inhibits host cell pyroptosis. Acts by mediating arginine ADP-riboxanation of host CASP4/CASP11, blocking CASP4/CASP11 autoprocessing. This prevents CASP4 activation and ability to recognize and cleave GSDMD, thereby inhibiting LPS-induced pyroptosis. ADP-riboxanation takes place in two steps: OspC3 first catalyzes ADP-ribosylation of target Arg, and then initiates a deamination to remove one N-omega group. Independently of its ADP-riboxanase activity, acts as an inhibitor of calcium signaling by inhibiting host calmodulin, preventing activation of the JAK-STAT signaling pathway in response to interferon-beta. Mechanistically, acts by binding to the apo form of calmodulin, preventing calcium-binding and ability to activate host CaMK2 (CAMKII), which is required to stimulate the JAK-STAT signaling pathway in response to interferon-beta. The sequence is that of Arginine ADP-riboxanase OspC3 from Shigella flexneri.